Consider the following 246-residue polypeptide: Bis(5'-nucleosyl)-tetraphosphatase PrpE [asymmetrical] (246 aa).

Belongs to the PrpE family. Ni(2+) is required as a cofactor.

The catalysed reaction is P(1),P(4)-bis(5'-guanosyl) tetraphosphate + H2O = GMP + GTP + 2 H(+). Its function is as follows. Asymmetrically hydrolyzes Ap4p to yield AMP and ATP. This is Bis(5'-nucleosyl)-tetraphosphatase PrpE [asymmetrical] from Bacillus cereus (strain ATCC 14579 / DSM 31 / CCUG 7414 / JCM 2152 / NBRC 15305 / NCIMB 9373 / NCTC 2599 / NRRL B-3711).